The primary structure comprises 249 residues: 5'-nucleotidase SurE (249 aa).

Asp-8, Asp-9, Ser-39, and Asn-91 together coordinate a divalent metal cation.

It belongs to the SurE nucleotidase family. Requires a divalent metal cation as cofactor.

It localises to the cytoplasm. The catalysed reaction is a ribonucleoside 5'-phosphate + H2O = a ribonucleoside + phosphate. Nucleotidase that shows phosphatase activity on nucleoside 5'-monophosphates. The sequence is that of 5'-nucleotidase SurE from Stutzerimonas stutzeri (strain A1501) (Pseudomonas stutzeri).